A 539-amino-acid chain; its full sequence is NADH-quinone oxidoreductase subunit N 2 (539 aa).

A run of 13 helical transmembrane segments spans residues 11-31, 52-72, 106-126, 141-161, 193-213, 248-268, 296-316, 329-349, 357-377, 385-405, 429-449, 462-484, and 500-520; these read LIPE…DVLT, LMGL…FSWM, PLTH…VILT, LILF…LIMI, YIFG…LLGL, GVAI…VAIV, AGFF…SILG, WTSL…LAAL, MLAY…VGTQ, LMYL…LALV, LLLT…GFFV, AKWL…LRFL, and VGFG…GLGI.

It belongs to the complex I subunit 2 family. As to quaternary structure, NDH-1 is composed of 14 different subunits. Subunits NuoA, H, J, K, L, M, N constitute the membrane sector of the complex.

It localises to the cell membrane. The enzyme catalyses a quinone + NADH + 5 H(+)(in) = a quinol + NAD(+) + 4 H(+)(out). Its function is as follows. NDH-1 shuttles electrons from NADH, via FMN and iron-sulfur (Fe-S) centers, to quinones in the respiratory chain. The immediate electron acceptor for the enzyme in this species is believed to be ubiquinone. Couples the redox reaction to proton translocation (for every two electrons transferred, four hydrogen ions are translocated across the cytoplasmic membrane), and thus conserves the redox energy in a proton gradient. The protein is NADH-quinone oxidoreductase subunit N 2 of Herpetosiphon aurantiacus (strain ATCC 23779 / DSM 785 / 114-95).